Consider the following 390-residue polypeptide: GTPase Obg (390 aa).

An Obg domain is found at 1-159 (MKFVDEAVVK…REIRLELLLL (159 aa)). In terms of domain architecture, OBG-type G spans 160–333 (ADVGMLGLPN…LCYKLADFME (174 aa)). Residues 166–173 (GLPNAGKS), 191–195 (FTTLI), 213–216 (DIPG), 283–286 (NKVD), and 314–316 (SAI) each bind GTP. 2 residues coordinate Mg(2+): Ser173 and Thr193. Acidic residues predominate over residues 367 to 382 (TEDDDDWDDWDDEEDD). Residues 367–390 (TEDDDDWDDWDDEEDDGHVVYVRD) are disordered.

Belongs to the TRAFAC class OBG-HflX-like GTPase superfamily. OBG GTPase family. As to quaternary structure, monomer. Mg(2+) is required as a cofactor.

The protein resides in the cytoplasm. An essential GTPase which binds GTP, GDP and possibly (p)ppGpp with moderate affinity, with high nucleotide exchange rates and a fairly low GTP hydrolysis rate. Plays a role in control of the cell cycle, stress response, ribosome biogenesis and in those bacteria that undergo differentiation, in morphogenesis control. This Vibrio parahaemolyticus serotype O3:K6 (strain RIMD 2210633) protein is GTPase Obg.